The following is a 1005-amino-acid chain: Helicase-like transcription factor (1005 aa).

Position 27 is an omega-N-methylarginine (R27). A DNA-binding region spans residues E38 to V287. Residue K112 forms a Glycyl lysine isopeptide (Lys-Gly) (interchain with G-Cter in SUMO2) linkage. Y195 bears the Phosphotyrosine; by JAK2 mark. A Glycyl lysine isopeptide (Lys-Gly) (interchain with G-Cter in SUMO2) cross-link involves residue K211. ATP is bound at residue D294 to T301. Positions K325–E361 are enriched in basic and acidic residues. Positions K325–R385 are disordered. Over residues Y373–Q382 the composition is skewed to polar residues. 3 positions are modified to phosphoserine: S395, S396, and S398. The region spanning G427–K603 is the Helicase ATP-binding domain. Positions D554–H557 match the DEGH box motif. T733 bears the Phosphothreonine mark. The RING-type zinc-finger motif lies at C757–R798. Required for interaction with the RFBP isoform of ATP11B regions lie at residues P767 to C772 and H791 to L796. The region spanning A834–I999 is the Helicase C-terminal domain. An interaction with SP1 and SP3 region spans residues S922 to L1005.

The protein belongs to the SNF2/RAD54 helicase family. RAD16 subfamily. In terms of assembly, interacts with SP1 and SP3 independently of DNA; the interaction with these transcriptional factors may be required for basal transcription of target genes. Interacts (via the RING-finger) with isoform RFBP of ATP11B. Progesterone-dependent isoform 1 interacts with EGR1; the interaction requires prior binding to DNA and represses c-Rel via a DNA looping mechanism. Interacts with GATA4. Interacts with PCNA; the interaction promotes polyubiquitination of PCNA through association with the UBE2B-RAD18 and UBE2V2-UBE2N ubiquitin ligase complexes. Interacts with RAD18, SHPRH, UBE2V2 and UBE2N. Post-translationally, phosphorylated on serine, threonine, and tyrosine residues. Tyr-195 phosphorylation is catalyzed by JAK2 in response to prolactin treatment. It is required for DNA binding. As to expression, isoform 1 is expressed preferentially in bladder, cervix, diaphragm, duodenum, epididymis, heart, kidney, liver, lung, ovary (granulosa cells), prostate, spleen, testis (predominantly in the Sertoli cells of the seminiferous tubules) and vagina. Isoform 2 is expressed preferentially in lactating mammary gland and uterine endometrium.

It localises to the cytoplasm. The protein localises to the nucleus. The protein resides in the nucleolus. It is found in the nucleoplasm. It catalyses the reaction S-ubiquitinyl-[E2 ubiquitin-conjugating enzyme]-L-cysteine + [acceptor protein]-L-lysine = [E2 ubiquitin-conjugating enzyme]-L-cysteine + N(6)-ubiquitinyl-[acceptor protein]-L-lysine.. It functions in the pathway protein modification; protein ubiquitination. Has both helicase and E3 ubiquitin ligase activities. Possesses intrinsic ATP-dependent nucleosome-remodeling activity. This activity may be required for transcriptional activation or repression of specific target promoters. These may include the SERPINE1, to which this protein can bind directly. Mediates repression by c-Rel through a DNA-looping mechanism. Plays a role in error-free postreplication repair (PRR) of damaged DNA and maintains genomic stability through acting as a ubiquitin ligase for 'Lys-63'-linked polyubiquitination of chromatin-bound PCNA. Transcriptional regulator that mediates the ability of prolactin to augment progesterone-dependent transcription of the SCGB1A1/uteroglobin gene through a bipartite progesterone receptor half-site/overlapping Y-box combination (-38/-26) where progesterone activation is attenuated by nuclear factor Y binding. Regulation also involves two GC-rich sequences in the proximal promoter (positions -162/+90) and a RUSH/SMARCA3 site (positions -616/-611) in the 5'-untranslated region. This Oryctolagus cuniculus (Rabbit) protein is Helicase-like transcription factor (HLTF).